Reading from the N-terminus, the 324-residue chain is Methionyl-tRNA formyltransferase (324 aa).

114 to 117 is a binding site for (6S)-5,6,7,8-tetrahydrofolate; it reads SLLP.

This sequence belongs to the Fmt family.

The enzyme catalyses L-methionyl-tRNA(fMet) + (6R)-10-formyltetrahydrofolate = N-formyl-L-methionyl-tRNA(fMet) + (6S)-5,6,7,8-tetrahydrofolate + H(+). In terms of biological role, attaches a formyl group to the free amino group of methionyl-tRNA(fMet). The formyl group appears to play a dual role in the initiator identity of N-formylmethionyl-tRNA by promoting its recognition by IF2 and preventing the misappropriation of this tRNA by the elongation apparatus. The protein is Methionyl-tRNA formyltransferase of Phocaeicola vulgatus (strain ATCC 8482 / DSM 1447 / JCM 5826 / CCUG 4940 / NBRC 14291 / NCTC 11154) (Bacteroides vulgatus).